Here is a 121-residue protein sequence, read N- to C-terminus: Holin-like protein CidA (121 aa).

A run of 4 helical transmembrane segments spans residues 3–23, 30–50, 58–78, and 89–109; these read WWKL…GEWI, PVPG…FNLV, GADF…VAVI, and IDLI…TGLL.

The protein belongs to the CidA/LrgA family. CidA subfamily.

Its subcellular location is the cell membrane. Functionally, increases the activity of extracellular murein hydrolases possibly by mediating their export via hole formation. Inhibited by the antiholin-like proteins LrgAB. In an unstressed cell, the LrgAB products probably inhibit the function of the CidA protein. When a cell is stressed by the addition of antibiotics or by other factors in the environment, CidA possibly oligomerizes within the bacterial cell membrane, creating lesions that disrupt the proton motive force, which in turn results in loss of cell viability. These lesions are also hypothesized to regulate the subsequent cell lysis by either allowing the murein hydrolases access to the cell wall substrate and/or regulating their activity by a possible change in the cell wall pH that results from loss of membrane potential. This is Holin-like protein CidA from Bacillus cereus (strain ATCC 10987 / NRS 248).